The primary structure comprises 298 residues: Probable alpha-L-glutamate ligase (298 aa).

In terms of domain architecture, ATP-grasp spans 108–290 (LQLLLKTGVP…IAAEIIDYIE (183 aa)). ATP contacts are provided by residues lysine 144, 181 to 182 (DF), aspartate 190, and 214 to 216 (RAN). 3 residues coordinate Mg(2+): aspartate 251, glutamate 263, and asparagine 265. Residues aspartate 251, glutamate 263, and asparagine 265 each coordinate Mn(2+).

It belongs to the RimK family. The cofactor is Mg(2+). Requires Mn(2+) as cofactor.

This chain is Probable alpha-L-glutamate ligase, found in Haemophilus influenzae (strain PittEE).